The sequence spans 282 residues: Pantothenate synthetase (282 aa).

Position 30–37 (30–37) interacts with ATP; sequence MGYLHAGH. The Proton donor role is filled by His-37. Gln-61 is a (R)-pantoate binding site. Gln-61 lines the beta-alanine pocket. Residue 147–150 participates in ATP binding; the sequence is GKKD. (R)-pantoate is bound at residue Gln-153. Residues Val-176 and 184–187 contribute to the ATP site; that span reads MSSR.

The protein belongs to the pantothenate synthetase family. Homodimer.

The protein localises to the cytoplasm. It catalyses the reaction (R)-pantoate + beta-alanine + ATP = (R)-pantothenate + AMP + diphosphate + H(+). The protein operates within cofactor biosynthesis; (R)-pantothenate biosynthesis; (R)-pantothenate from (R)-pantoate and beta-alanine: step 1/1. Catalyzes the condensation of pantoate with beta-alanine in an ATP-dependent reaction via a pantoyl-adenylate intermediate. This chain is Pantothenate synthetase, found in Geotalea uraniireducens (strain Rf4) (Geobacter uraniireducens).